Here is a 156-residue protein sequence, read N- to C-terminus: Ribosome maturation factor RimP (156 aa).

It belongs to the RimP family.

Its subcellular location is the cytoplasm. Functionally, required for maturation of 30S ribosomal subunits. The protein is Ribosome maturation factor RimP of Lachnospira eligens (strain ATCC 27750 / DSM 3376 / VPI C15-48 / C15-B4) (Eubacterium eligens).